The following is a 1141-amino-acid chain: MARYTQRPENALKRANEFIEVGKPLRALDTLQEVFRNKRWNYAYSETVIEPLMFKYLYLCVELKKSHIAKEGLFQYRNMFQLVNVNSLENVIRGYLKMAEEHTEAAQAQSSAAVAVLELDDLDNIATPESILMSAVCGEDAQDRSDRTILLPWVKFLWESYCQCLELLRVNTHCEALYHDIARMAFQFCLKYNRKSEFRRLCDKLRKHLEDICKSSNQTTGVSINKVETQQLCLDTRLYLLDSAIQMELWQEAYKAIEDIHGLMALSKKTPVPKTMANYYQKLAMVFSKAGNQLFHAAALLKLFQLTRELKKNLTKDDLQRMAAHVLLATLSIPLPSAHPEFDRFIEADKSPLEKAQKLAVLLGLPQPPTRVSLIREVVRLNVPQLVSEDFRNLYNWLEVDFNPLNLCKRIQSIVDFIENGPENALLTPYIQSLKDVTIMRLIRQISQVYESIKFQRLLQLASFCNIFELEKLLVESVRHNDMQIRIDHQKNSIYFGTDLTESQREYRPDGPALQSMPSEQIRSQLVNMSTVLTRAVSIVYPNRERDQRAKLRNQMVSQYHEIKDREHQRILQRQKIIEDRKEYIEKQNNAREEEEARRQEEESRKAKLAEQKRLEQEQEERERKRHQNEIQAIREKSLKEKVQQISQTAHGKKMLSKLDEEGIKKLDAEQIAKRESEELQREAKELQSKLKSQEKKIDYFERAKRLEEIPLFEKYLAEKQVKDKEFWEATEKTRIENAIAERKDAVAQQERLKRMYPDRDEFLEALKKERASLYVEKLKKFEAALEAERKKRLADRIVRRREERRQAFLREKEEERLRKEEEIRLAQAAEERAAAEARRLEREAEDEKRRAQYEKQRAKEEEAERKIKEDRDRLSRELASERERTEKERDTWRPRGGDRPSASAGGSSEWRRAAPAVSERNDRGGERIERGGDRVERGGERIERGGERIERGGDRDRKDNEGADSSWRVRREPDTQRAAAPKDSGAPQSRDDKWRRGGERDRDFRNDGARRDRDDGPRRDRDDGPRRDRDDERGGFRRNDGPRRTDEPQRETGGNWRDAPRHADRENRRPAGERRDRDVRETRGDQRGSAPKEAASGGGGGNWRNAPATREEKPAAKRDQAQEKENKAGDDGEWTSVKRR.

Residues 319 to 501 form the PCI domain; the sequence is LQRMAAHVLL…NSIYFGTDLT (183 aa). Composition is skewed to basic and acidic residues over residues 588–623 and 829–899; these read QNNA…EERE and AAEE…RGGD. 2 disordered regions span residues 588–631 and 829–1141; these read QNNA…QNEI and AAEE…VKRR. Ser908 is modified (phosphoserine). Basic and acidic residues-rich tracts occupy residues 920–976, 990–1051, 1059–1087, and 1110–1131; these read ERND…EPDT, SRDD…EPQR, DAPR…RGDQ, and TREE…KAGD.

It belongs to the eIF-3 subunit A family. Component of the eukaryotic translation initiation factor 3 (eIF-3) complex. The eIF-3 complex interacts with pix.

The protein localises to the cytoplasm. Functionally, RNA-binding component of the eukaryotic translation initiation factor 3 (eIF-3) complex, which is involved in protein synthesis of a specialized repertoire of mRNAs and, together with other initiation factors, stimulates binding of mRNA and methionyl-tRNAi to the 40S ribosome. The eIF-3 complex specifically targets and initiates translation of a subset of mRNAs involved in cell proliferation. In Drosophila simulans (Fruit fly), this protein is Eukaryotic translation initiation factor 3 subunit A.